Consider the following 366-residue polypeptide: Histidinol-phosphate aminotransferase 2 (366 aa).

Residues M1–Q11 show a composition bias toward polar residues. Positions M1 to Q21 are disordered. K222 is modified (N6-(pyridoxal phosphate)lysine).

It belongs to the class-II pyridoxal-phosphate-dependent aminotransferase family. Histidinol-phosphate aminotransferase subfamily. Homodimer. It depends on pyridoxal 5'-phosphate as a cofactor.

It catalyses the reaction L-histidinol phosphate + 2-oxoglutarate = 3-(imidazol-4-yl)-2-oxopropyl phosphate + L-glutamate. Its pathway is amino-acid biosynthesis; L-histidine biosynthesis; L-histidine from 5-phospho-alpha-D-ribose 1-diphosphate: step 7/9. The protein is Histidinol-phosphate aminotransferase 2 of Bacillus cereus (strain ATCC 10987 / NRS 248).